Consider the following 690-residue polypeptide: Eukaryotic translation initiation factor 3 subunit B (690 aa).

Residues 1–11 (MAKKKSEDHSG) are compositionally biased toward basic and acidic residues. The segment at 1–37 (MAKKKSEDHSGGDANDSDYNEEPNFEDPPNFVDNISD) is disordered. A compositionally biased stretch (acidic residues) spans 15-25 (NDSDYNEEPNF). The RRM domain maps to 57–141 (SVVVVDNIPK…HTFAVNLFTD (85 aa)). 6 WD repeats span residues 207–246 (TRER…KIQK), 247–289 (FPHT…EKRS), 293–331 (DGMS…LLDL), 334–369 (IKIP…TLME), 442–484 (EIRE…KPSL), and 530–575 (PDHF…IKRT). The stretch at 614 to 645 (QKDRLRLTRASKELLEKRSQLRETFMEYRNKR) forms a coiled coil.

It belongs to the eIF-3 subunit B family. In terms of assembly, component of the eukaryotic translation initiation factor 3 (eIF-3) complex. The eIF-3 complex interacts with pix. Interacts with mxt.

The protein localises to the cytoplasm. Its function is as follows. RNA-binding component of the eukaryotic translation initiation factor 3 (eIF-3) complex, which is involved in protein synthesis of a specialized repertoire of mRNAs and, together with other initiation factors, stimulates binding of mRNA and methionyl-tRNAi to the 40S ribosome. The eIF-3 complex specifically targets and initiates translation of a subset of mRNAs involved in cell proliferation. In Drosophila pseudoobscura pseudoobscura (Fruit fly), this protein is Eukaryotic translation initiation factor 3 subunit B.